We begin with the raw amino-acid sequence, 413 residues long: Zinc finger CCCH domain-containing protein 6 (413 aa).

Disordered regions lie at residues 28–61 (PSQV…FGGP), 159–191 (DSAS…TLPA), and 333–356 (QPGG…RDSK). Residues 176-189 (PSITDENTSTSSTL) are compositionally biased toward polar residues. A C3H1-type zinc finger spans residues 357-385 (PKIMKACMYFNSARGCRHGANCMYQHDAT). Positions 389–403 (PRNLNNGNINTSDMQ) are enriched in polar residues. Residues 389–413 (PRNLNNGNINTSDMQNAKRMRFDRD) are disordered.

The sequence is that of Zinc finger CCCH domain-containing protein 6 from Arabidopsis thaliana (Mouse-ear cress).